The primary structure comprises 256 residues: Protein FixA (256 aa).

The protein belongs to the ETF beta-subunit/FixA family. Heterodimer of FixA and FixB.

It functions in the pathway amine and polyamine metabolism; carnitine metabolism. Its function is as follows. Required for anaerobic carnitine reduction. May bring reductant to CaiA. In Salmonella agona (strain SL483), this protein is Protein FixA.